Reading from the N-terminus, the 619-residue chain is Protein CPn_1016/CP_0837/CPj1016/CpB1054 (619 aa).

Residues 591–619 (NAKKSEEQTSPQETPEVIRVSYPTTTSAL) form a disordered region.

The protein belongs to the chlamydial CPn_1016/CT_858/TC_0248 family.

The sequence is that of Protein CPn_1016/CP_0837/CPj1016/CpB1054 from Chlamydia pneumoniae (Chlamydophila pneumoniae).